Reading from the N-terminus, the 350-residue chain is Cilia- and flagella-associated protein 36 (350 aa).

Residues 142-167 are a coiled coil; it reads SELEQQEMKILQEVLRRSKEEYDLQM. Disordered stretches follow at residues 171–233 and 301–337; these read GLGS…ATTA and RQTG…QKRK. The span at 177-220 shows a compositional bias: polar residues; sequence LASTSSSVSETPQNPEQRLSNGVSDPLTLTQPDSEMEESSTATQ. A coiled-coil region spans residues 280 to 350; the sequence is VALQQRSEYL…EKLKEEVIKK (71 aa).

It belongs to the CFAP36 family.

It is found in the nucleus. The protein resides in the cytoplasm. Its subcellular location is the cell projection. The protein localises to the cilium. It localises to the flagellum. The chain is Cilia- and flagella-associated protein 36 from Danio rerio (Zebrafish).